Reading from the N-terminus, the 537-residue chain is Glutamyl-tRNA(Gln) amidotransferase subunit B, chloroplastic/mitochondrial (537 aa).

It belongs to the GatB/GatE family. GatB subfamily. In terms of assembly, subunit of the heterotrimeric GatCAB amidotransferase (AdT) complex, composed of A, B and C subunits.

The protein resides in the mitochondrion. It localises to the plastid. The protein localises to the chloroplast. The enzyme catalyses L-glutamyl-tRNA(Gln) + L-glutamine + ATP + H2O = L-glutaminyl-tRNA(Gln) + L-glutamate + ADP + phosphate + H(+). Allows the formation of correctly charged Gln-tRNA(Gln) through the transamidation of misacylated Glu-tRNA(Gln) in chloroplasts and mitochondria. The reaction takes place in the presence of glutamine and ATP through an activated gamma-phospho-Glu-tRNA(Gln). The protein is Glutamyl-tRNA(Gln) amidotransferase subunit B, chloroplastic/mitochondrial of Ostreococcus tauri.